Reading from the N-terminus, the 287-residue chain is Small ribosomal subunit protein uS3 (287 aa).

The KH type-2 domain maps to 38–106 (IRRLLATGLE…QVQLNILEVK (69 aa)). The tract at residues 216 to 287 (AAAPAGADRP…AETTTQNPGS (72 aa)) is disordered. Residues 238 to 287 (SGASGTTATSTDAGRAASGTQEAPAAAEAAAGTEAAAGAAAETTTQNPGS) are compositionally biased toward low complexity.

It belongs to the universal ribosomal protein uS3 family. In terms of assembly, part of the 30S ribosomal subunit. Forms a tight complex with proteins S10 and S14.

Binds the lower part of the 30S subunit head. Binds mRNA in the 70S ribosome, positioning it for translation. The chain is Small ribosomal subunit protein uS3 from Mycobacterium sp. (strain JLS).